The following is an 847-amino-acid chain: KN motif and ankyrin repeat domain-containing protein 2 (847 aa).

The interval 1-32 (MAQVLHVPAPFPGTPGQASSAAFPNKEPDPPY) is disordered. The interaction with AIFM1 stretch occupies residues 1 to 72 (MAQVLHVPAP…PVQRRPRLGS (72 aa)). Residues serine 19, serine 83, serine 86, serine 89, and serine 92 each carry the phosphoserine modification. The residue at position 105 (arginine 105) is an Omega-N-methylarginine. The tract at residues 161–182 (LAGVGLLPPTPRSSGLSTPVAP) is disordered. Position 170 is a phosphothreonine (threonine 170). Coiled-coil stretches lie at residues 187–207 (LAHV…LEEQ) and 284–311 (EAAL…AQTQ). Threonine 331 carries the post-translational modification Phosphothreonine. Serine 358 is modified (phosphoserine). Disordered stretches follow at residues 414–473 (GAAR…GGAS) and 502–581 (NGGY…PEEE). Over residues 420-433 (DPPPSPAEPSPSSP) the composition is skewed to pro residues. 2 stretches are compositionally biased toward low complexity: residues 434 to 446 (YPAA…APAA) and 506 to 516 (ESSSEDSSTAE). Serine 536 is subject to Phosphoserine. One copy of the ANK 0; degenerate repeat lies at 610–647 (RELKVAYTTVLQEWLRLACRSDAHPELVRRHLVTFRAM). ANK repeat units lie at residues 662–692 (NGNT…QVDK), 696–729 (AGYS…NVNA), 734–763 (AGQT…DVNM), 767–797 (DGST…DISL), and 801–831 (DGST…KCSF). Positions 665–831 (TALHYSVSHA…YSRMNIKCSF (167 aa)) are interaction with NCOA1.

Interacts (non-phosphorylated form) with NCOA1; NCOA2 AND NCOA3. Interacts with AIFM1. Interacts with ARHGDIA; the interaction is direct and may regulate the interaction of ARHGDIA with RHOA, RAC1 and CDC42. Interacts (via ANK repeats 1-5) with KIF21A. Phosphorylated by casein kinase II upon estrogen stimulation. Phosphorylation induces the release by KANK2 of NCOA1 and its translocation to the nucleus where NCOA1 can activate gene transcription. In terms of tissue distribution, expressed by podocytes in kidney glomeruli (at protein level).

The protein localises to the cytoplasm. It is found in the mitochondrion. Functionally, involved in transcription regulation by sequestering in the cytoplasm nuclear receptor coactivators such as NCOA1, NCOA2 and NCOA3. Involved in regulation of caspase-independent apoptosis by sequestering the proapoptotic factor AIFM1 in mitochondria. Pro-apoptotic stimuli can induce its proteasomal degradation allowing the translocation of AIFM1 to the nucleus to induce apoptosis. Involved in the negative control of vitamin D receptor signaling pathway. Involved in actin stress fibers formation through its interaction with ARHGDIA and the regulation of the Rho signaling pathway. May thereby play a role in cell adhesion and migration, regulating for instance podocytes migration during development of the kidney. Through the Rho signaling pathway may also regulate cell proliferation. This is KN motif and ankyrin repeat domain-containing protein 2 from Rattus norvegicus (Rat).